A 286-amino-acid polypeptide reads, in one-letter code: 2-dehydro-3-deoxyphosphooctonate aldolase (286 aa).

The protein belongs to the KdsA family.

The protein localises to the cytoplasm. The enzyme catalyses D-arabinose 5-phosphate + phosphoenolpyruvate + H2O = 3-deoxy-alpha-D-manno-2-octulosonate-8-phosphate + phosphate. Its pathway is carbohydrate biosynthesis; 3-deoxy-D-manno-octulosonate biosynthesis; 3-deoxy-D-manno-octulosonate from D-ribulose 5-phosphate: step 2/3. It participates in bacterial outer membrane biogenesis; lipopolysaccharide biosynthesis. The sequence is that of 2-dehydro-3-deoxyphosphooctonate aldolase from Bradyrhizobium sp. (strain BTAi1 / ATCC BAA-1182).